The primary structure comprises 260 residues: Acetylglutamate kinase (260 aa).

Substrate is bound by residues 45 to 46 (GG), Arg-67, and Asn-159.

This sequence belongs to the acetylglutamate kinase family. ArgB subfamily.

It is found in the cytoplasm. The catalysed reaction is N-acetyl-L-glutamate + ATP = N-acetyl-L-glutamyl 5-phosphate + ADP. The protein operates within amino-acid biosynthesis; L-arginine biosynthesis; N(2)-acetyl-L-ornithine from L-glutamate: step 2/4. Its function is as follows. Catalyzes the ATP-dependent phosphorylation of N-acetyl-L-glutamate. This is Acetylglutamate kinase from Colwellia psychrerythraea (strain 34H / ATCC BAA-681) (Vibrio psychroerythus).